A 721-amino-acid polypeptide reads, in one-letter code: Sodium/hydrogen exchanger 6 (721 aa).

Residues 1-44 (MTSPKPWARSAGSCQTQRAVRTRKKECREEGESDTEKGPAASSA) are disordered. The span at 26 to 37 (ECREEGESDTEK) shows a compositional bias: basic and acidic residues. Transmembrane regions (helical) follow at residues 91 to 111 (SANLLIFILLLTLTILTIWLF), 123 to 143 (GLAMIYGLLVGLVLRYGIHVP), 196 to 216 (VTFDPEVFFNILLPPIIFYAG), 231 to 251 (ILAYAFLGTAISCFVIGSIMY), 272 to 292 (CLLFGAIVSATDPVTVLAIFH), 298 to 318 (VELYALLFGESVLNDAVAIVL), 344 to 364 (IGIFLGIFSGSFAMGAATGVV), 388 to 412 (MSWSTFLLAEAWGFTGVVAVLFCGI), 434 to 454 (FELLNFLAENFIFSYMGLTLF), 456 to 476 (FQNHVFNPTFVVGAFIAIFLG), 499 to 519 (NFQHMMMFAGLRGAMAFALAI), and 535 to 555 (LLIVFFTVWVFGGGTTAMLSC).

It belongs to the monovalent cation:proton antiporter 1 (CPA1) transporter (TC 2.A.36) family. Homodimer. Interacts with RACK1; regulates the distribution of SLC9A6 between endosomes and the plasma membrane. In terms of processing, ubiquitinated (in vitro). Post-translationally, glycosylated.

The protein localises to the endosome membrane. The protein resides in the recycling endosome membrane. It is found in the early endosome membrane. It localises to the late endosome membrane. Its subcellular location is the cell membrane. The enzyme catalyses Na(+)(in) + H(+)(out) = Na(+)(out) + H(+)(in). It carries out the reaction K(+)(in) + H(+)(out) = K(+)(out) + H(+)(in). Its function is as follows. Endosomal Na(+), K(+)/H(+) antiporter. Mediates the electroneutral exchange of endosomal luminal H(+) for a cytosolic Na(+) or K(+). By facilitating proton efflux, SLC9A6 counteracts the acidity generated by vacuolar (V)-ATPase, thereby limiting luminal acidification. Responsible for alkalizing and maintaining the endosomal pH, and consequently in, e.g., endosome maturation and trafficking of recycling endosomal cargo. Plays a critical role during neurodevelopment by regulating synaptic development and plasticity. Implicated in the maintenance of cell polarity in a manner that is dependent on its ability to modulate intravesicular pH. Regulates intracelular pH in some specialized cells, osteoclasts and stereocilia where this transporter localizes to the plasma membrane. In Rattus norvegicus (Rat), this protein is Sodium/hydrogen exchanger 6.